A 202-amino-acid chain; its full sequence is Pyrrolidone-carboxylate peptidase (202 aa).

Active-site residues include Glu-78, Cys-141, and His-165.

Belongs to the peptidase C15 family. As to quaternary structure, homotetramer.

The protein resides in the cytoplasm. The catalysed reaction is Release of an N-terminal pyroglutamyl group from a polypeptide, the second amino acid generally not being Pro.. Functionally, removes 5-oxoproline from various penultimate amino acid residues except L-proline. In Thermosipho melanesiensis (strain DSM 12029 / CIP 104789 / BI429), this protein is Pyrrolidone-carboxylate peptidase.